A 535-amino-acid chain; its full sequence is Cytochrome P450 monooxygenase BOA7 (535 aa).

Residues 20-37 (SIFLILGFFVLAAILIAW) traverse the membrane as a helical segment. N-linked (GlcNAc...) asparagine glycosylation is found at Asn-65, Asn-148, Asn-180, and Asn-420. Cys-478 provides a ligand contact to heme.

It belongs to the cytochrome P450 family. Requires heme as cofactor.

Its subcellular location is the membrane. It functions in the pathway polyketide biosynthesis. Functionally, cytochrome P450 monooxygenase; part of the gene cluster B that mediates the biosynthesis of botcinic acid and its botcinin derivatives, acetate-derived polyketides that contribute to virulence when combined with the sesquiterpene botrydial. Botcinic acid and its derivatives have been shown to induce chlorosis and necrosis during host plant infection, but also have antifungal activities. Two polyketide synthases, BOA6 and BOA9, are involved in the biosynthesis of botcinins. BOA6 mediates the formation of the per-methylated tetraketide core by condensation of four units of malonyl-CoA with one unit of acetyl-CoA, which would be methylated in activated methylene groups to yield a bicyclic acid intermediate that could then either be converted to botrylactone derivatives or lose the starter acetate unit through a retro-Claisen type C-C bond cleavage to yield botcinin derivatives. The second polyketide synthase, BOA9, is probably required for the biosynthesis of the tetraketide side chain of botcinins. The methyltransferase (MT) domain within BOA6 is probably responsible for the incorporation of four methyl groups. The trans-enoyl reductase BOA5 might take over the enoyl reductase function of BOA6 that misses an ER domain. The monooxygenases BOA2, BOA3 and BOA4 might be involved in further hydroxylations at C4, C5 and C8, whereas BOA7, close to BOA9, could potentially be involved in the hydroxylation at C4 in the side chain of botcinins. The sequence is that of Cytochrome P450 monooxygenase BOA7 from Botryotinia fuckeliana (strain B05.10) (Noble rot fungus).